A 94-amino-acid chain; its full sequence is Small ribosomal subunit protein bS6 (94 aa).

The protein belongs to the bacterial ribosomal protein bS6 family.

Functionally, binds together with bS18 to 16S ribosomal RNA. This Desulforudis audaxviator (strain MP104C) protein is Small ribosomal subunit protein bS6.